The following is a 339-amino-acid chain: Phenylalanine--tRNA ligase alpha subunit (339 aa).

Mg(2+) is bound at residue Glu-247.

This sequence belongs to the class-II aminoacyl-tRNA synthetase family. Phe-tRNA synthetase alpha subunit type 1 subfamily. Tetramer of two alpha and two beta subunits. It depends on Mg(2+) as a cofactor.

The protein localises to the cytoplasm. It catalyses the reaction tRNA(Phe) + L-phenylalanine + ATP = L-phenylalanyl-tRNA(Phe) + AMP + diphosphate + H(+). The polypeptide is Phenylalanine--tRNA ligase alpha subunit (Deinococcus geothermalis (strain DSM 11300 / CIP 105573 / AG-3a)).